The chain runs to 138 residues: uncharacterized protein (138 aa).

The helical transmembrane segment at 11–33 (ILLGLTLSLTFLYPLIITLIILY) threads the bilayer.

The protein localises to the membrane. This is an uncharacterized protein from Aquifex aeolicus (strain VF5).